A 349-amino-acid polypeptide reads, in one-letter code: Protein Wnt-7a (349 aa).

The N-terminal stretch at 1–31 (MNRKARRCLGHLFLSLGMVYLRIGGFSTVVA) is a signal peptide. Disulfide bonds link Cys73/Cys84, Cys123/Cys131, Cys133/Cys152, Cys200/Cys214, and Cys202/Cys209. 2 N-linked (GlcNAc...) asparagine glycosylation sites follow: Asn83 and Asn127. Ser206 is lipidated: O-palmitoleoyl serine; by PORCN. Positions 238–266 (VEPVRASRNKRPTFLKIKKPLSYRKPMDT) are disordered linker. 6 disulfide bridges follow: Cys278–Cys309, Cys294–Cys304, Cys308–Cys348, Cys324–Cys339, Cys326–Cys336, and Cys331–Cys332. Asn295 carries N-linked (GlcNAc...) asparagine glycosylation.

This sequence belongs to the Wnt family. In terms of assembly, forms a soluble 1:1 complex with AFM; this prevents oligomerization and is required for prolonged biological activity. The complex with AFM may represent the physiological form in body fluids. Interacts with PORCN. Interacts (via intrinsically disordered linker region) with RECK; interaction with RECK confers ligand selectivity for Wnt7 in brain endothelial cells and allows these cells to selectively respond to Wnt7. Interacts with FZD5. In terms of processing, palmitoleoylation is required for efficient binding to frizzled receptors. Depalmitoleoylation leads to Wnt signaling pathway inhibition.

The protein resides in the secreted. It localises to the extracellular space. The protein localises to the extracellular matrix. In terms of biological role, ligand for members of the frizzled family of seven transmembrane receptors that functions in the canonical Wnt/beta-catenin signaling pathway. Plays an important role in embryonic development, including dorsal versus ventral patterning during limb development, skeleton development and urogenital tract development. Required for central nervous system (CNS) angiogenesis and blood-brain barrier regulation. Required for normal, sexually dimorphic development of the Mullerian ducts, and for normal fertility in both sexes. Required for normal neural stem cell proliferation in the hippocampus dentate gyrus. Required for normal progress through the cell cycle in neural progenitor cells, for self-renewal of neural stem cells, and for normal neuronal differentiation and maturation. Promotes formation of synapses via its interaction with FZD5. This chain is Protein Wnt-7a (WNT7A), found in Chlorocebus aethiops (Green monkey).